Reading from the N-terminus, the 526-residue chain is Carotenoid cleavage oxygenase 1 (526 aa).

The disordered stretch occupies residues methionine 1–alanine 33. Piceatannol is bound by residues tyrosine 133 and lysine 164. Tyrosine 133 and lysine 164 together coordinate trans-resveratrol. Histidine 197, histidine 248, and histidine 313 together coordinate Fe cation. Glutamate 383 lines the piceatannol pocket. Glutamate 383 is a binding site for trans-resveratrol. A Fe cation-binding site is contributed by histidine 510.

It belongs to the carotenoid oxygenase family. It depends on Fe(2+) as a cofactor.

It carries out the reaction trans-resveratrol + O2 = 3,5-dihydroxybenzaldehyde + 4-hydroxybenzaldehyde. The catalysed reaction is piceatannol + O2 = 3,5-dihydroxybenzaldehyde + 3,4-dihydroxybenzaldehyde. Its function is as follows. Dioxygenase that cleaves the interphenyl C-alpha-C-beta double bond of resveratrol to yield 3,5-dihydroxybenzaldehyde and 4-hydroxybenzaldehyde. Also cleaves piceatannol, a compound that differs from resveratrol only in the occurrence of an additional hydroxyl group, which leads to the production of 3,4-dihydroxybenzaldehyde and 3,5-hydroxybenzaldehyde. Is not able to cleave trans-stilbene, 4-monohydroxy-trans-stilbene, 3,5-dihydroxy-trans-stilbene (pinosylvin), trismethoxy-resveratrol, and 3,3',5-trihydroxy-4'-methoxystilbene-3-O-beta-D-glucoside. Is not involved in carotenoid metabolism. This is Carotenoid cleavage oxygenase 1 from Neurospora crassa (strain ATCC 24698 / 74-OR23-1A / CBS 708.71 / DSM 1257 / FGSC 987).